An 860-amino-acid chain; its full sequence is DNA primase (860 aa).

The segment at 804–842 (CLNRQHRGNRDNVLVYIQLKADGNRLILILWSTCFATKC) adopts a CHC2-type zinc-finger fold.

This sequence belongs to the herpesviridae DNA primase family. As to quaternary structure, associates with the helicase and the primase-associated factor to form the helicase-primase factor.

Its subcellular location is the host nucleus. In terms of biological role, essential component of the helicase/primase complex. Unwinds the DNA at the replication forks and generates single-stranded DNA for both leading and lagging strand synthesis. The primase initiates primer synthesis and thereby produces large amount of short RNA primers on the lagging strand that the polymerase elongates using dNTPs. The protein is DNA primase (U43) of Homo sapiens (Human).